A 259-amino-acid chain; its full sequence is L-cystine import ATP-binding protein TcyN (259 aa).

One can recognise an ABC transporter domain in the interval 2–239; sequence IEIKNIHKQF…TKKDRTRQFL (238 aa). Residue 34 to 41 coordinates ATP; the sequence is GPSGSGKT.

Belongs to the ABC transporter superfamily. L-cystine importer (TC 3.A.1.3.13) family. In terms of assembly, the complex is composed of two ATP-binding proteins (TcyN), two transmembrane proteins (TcyL and TcyM) and two solute-binding proteins (TcyJ and TcyK).

The protein resides in the cell membrane. Part of the ABC transporter complex TcyJKLMN involved in L-cystine import. Responsible for energy coupling to the transport system. Is also involved in cystathionine, djenkolate, and S-methylcysteine transport. The protein is L-cystine import ATP-binding protein TcyN (tcyN) of Bacillus subtilis (strain 168).